Here is a 740-residue protein sequence, read N- to C-terminus: Arf-GAP with coiled-coil, ANK repeat and PH domain-containing protein 1 (740 aa).

The BAR domain maps to 1–226 (MTVKLDFEEC…RKELGTQLHN (226 aa)). The segment at 1–382 (MTVKLDFEEC…RGPGQVSGYH (382 aa)) is required for formation of endosomal tubules when overexpressed with PIP5K1C. In terms of domain architecture, PH spans 265-360 (GLVMEGHLFK…WVSAVQSSIA (96 aa)). In terms of domain architecture, Arf-GAP spans 405-527 (GQVAAQVQSV…KFLTKLPEIR (123 aa)). Positions 405-740 (GQVAAQVQSV…SRRSHDLHTL (336 aa)) are required for interaction with GULP1. Residues 420–443 (CCDCREPAPEWASINLGVTLCIQC) form a C4-type zinc finger. Residue Tyr485 is modified to 3'-nitrotyrosine. Positions 525-562 (EIRGRRGGRGPPRGHPPVPPKPPIRPHSGIVRSKSECP) are disordered. The prevents interaction with ITGB1 when S-554 is not phosphorylated stretch occupies residues 525-566 (EIRGRRGGRGPPRGHPPVPPKPPIRPHSGIVRSKSECPSDDM). Residues 537 to 549 (RGHPPVPPKPPIR) are compositionally biased toward pro residues. 3 ANK repeats span residues 606 to 635 (GNATPLIRATAANSLLACEFLLQNGANVNQ), 639 to 668 (AGRGPLHHATILGHTGLACLFLKRGADLGA), and 672 to 702 (EGRDPLTIAMETTNADIVTLLRLAKMREAEA).

In terms of assembly, banana-shaped homodimer laterally assembling into tetramers, the tetramers further pack helically onto the membrane. Interacts with GTP-bound ARF6. Interacts with third cytoplasmic loop of SLC2A4/GLUT4. Interacts with CLTC. Interacts with GULP1. Forms a complex with GDP-bound ARF6 and GULP1. Interacts with ITGB1; required for ITGB1 recycling.

It localises to the recycling endosome membrane. Its activity is regulated as follows. GAP activity stimulated by phosphatidylinositol 4,5-bisphosphate (PIP2) and phosphatidic acid. GTPase-activating protein (GAP) for ADP ribosylation factor 6 (ARF6) required for clathrin-dependent export of proteins from recycling endosomes to trans-Golgi network and cell surface. Required for regulated export of ITGB1 from recycling endosomes to the cell surface and ITGB1-dependent cell migration. This Mus musculus (Mouse) protein is Arf-GAP with coiled-coil, ANK repeat and PH domain-containing protein 1 (Acap1).